A 414-amino-acid chain; its full sequence is MYHRNILVEQTDPEIWAAIQAENARQEHHIELIASENYASPAVMAAQGSQLTNKYAEGYPGKRYYGGCEHVDVAEQLAIDRVKQIFGADAANVQPHCGASANEAVMLAFLKPGDTIMGMSLAEGGHLTHGMPLNMSGKWFNVVSYGLDANEAIDYDAMERKAHEHMPKLIIAGASAYSLRIDFERFAKVAKDVGAIFMVDIAHYAGLVAAGVYPNPVPHADVVTSTTHKSLRGPRGGIILMKSQHEKAINSAIFPGLQGGPLMHVIAAKAVAFKEAMSPEFKAYQQQVVKNAQIVADTLTERGLRIVSGRTESHVMLVDLRAKGITGKEAEAVLGSAHMTINKNAIPNDPEKPMVTSGVRIGTPAMTTRGFRDEEARITANLIADVLENPRDAANIDAVRAKVHALTSRFPVYR.

(6S)-5,6,7,8-tetrahydrofolate contacts are provided by residues Leu-121 and 125-127 (GHL). Lys-229 bears the N6-(pyridoxal phosphate)lysine mark.

This sequence belongs to the SHMT family. As to quaternary structure, homodimer. It depends on pyridoxal 5'-phosphate as a cofactor.

Its subcellular location is the cytoplasm. It catalyses the reaction (6R)-5,10-methylene-5,6,7,8-tetrahydrofolate + glycine + H2O = (6S)-5,6,7,8-tetrahydrofolate + L-serine. It participates in one-carbon metabolism; tetrahydrofolate interconversion. Its pathway is amino-acid biosynthesis; glycine biosynthesis; glycine from L-serine: step 1/1. Catalyzes the reversible interconversion of serine and glycine with tetrahydrofolate (THF) serving as the one-carbon carrier. This reaction serves as the major source of one-carbon groups required for the biosynthesis of purines, thymidylate, methionine, and other important biomolecules. Also exhibits THF-independent aldolase activity toward beta-hydroxyamino acids, producing glycine and aldehydes, via a retro-aldol mechanism. This Variovorax paradoxus (strain S110) protein is Serine hydroxymethyltransferase.